The sequence spans 109 residues: uncharacterized protein (109 aa).

Residues 78–98 (YTCIMYIGLLCMFVLLYMTVI) traverse the membrane as a helical segment.

The protein resides in the membrane. This is an uncharacterized protein from Saccharomyces cerevisiae (strain ATCC 204508 / S288c) (Baker's yeast).